The primary structure comprises 60 residues: Sperm protamine P1 (60 aa).

The interval 1–60 (MARYRHSRSRSRSRYQRRRRRRSRYRSQRRRYRRRRGSRRRRRRGRRRGYRRRYSRRRRY) is disordered.

This sequence belongs to the protamine P1 family. In terms of tissue distribution, testis.

The protein localises to the nucleus. It localises to the chromosome. Its function is as follows. Protamines substitute for histones in the chromatin of sperm during the haploid phase of spermatogenesis. They compact sperm DNA into a highly condensed, stable and inactive complex. The protein is Sperm protamine P1 (PRM1) of Phascolarctos cinereus (Koala).